The following is a 161-amino-acid chain: Regulator of ribonuclease activity A (161 aa).

The protein belongs to the RraA family. Homotrimer. Binds to both RNA-binding sites in the C-terminal region of Rne and to RhlB.

It is found in the cytoplasm. Its function is as follows. Globally modulates RNA abundance by binding to RNase E (Rne) and regulating its endonucleolytic activity. Can modulate Rne action in a substrate-dependent manner by altering the composition of the degradosome. Modulates RNA-binding and helicase activities of the degradosome. This is Regulator of ribonuclease activity A from Enterobacter sp. (strain 638).